A 324-amino-acid polypeptide reads, in one-letter code: Succinylglutamate desuccinylase (324 aa).

Zn(2+)-binding residues include histidine 53, glutamate 56, and histidine 148. Glutamate 211 is a catalytic residue.

Belongs to the AspA/AstE family. Succinylglutamate desuccinylase subfamily. Requires Zn(2+) as cofactor.

The enzyme catalyses N-succinyl-L-glutamate + H2O = L-glutamate + succinate. It participates in amino-acid degradation; L-arginine degradation via AST pathway; L-glutamate and succinate from L-arginine: step 5/5. In terms of biological role, transforms N(2)-succinylglutamate into succinate and glutamate. The chain is Succinylglutamate desuccinylase from Acinetobacter baumannii (strain SDF).